A 455-amino-acid polypeptide reads, in one-letter code: MISLSLKKIALITNGTLYGADLLINEIVIDTKKIIPGCLFIALIGRKFDAHIFIHDALKKKCAAFVTQKNIKPHVPYIIVENTSIALGQIAGWVRKKTKAKILAITGSCGKTSVKEMTASILRKNGNTISTIDNLNNNIGVPMTLLQLKQEHKYGVIELGASKPGEIAYTSNISQPDIILINNIHCAHLQGFKSLLGVSKAKSEIFSGLKPNSTVIINLDSHHFSQWKKDIKNSNILFFSIKKKKYSNFFCSNIKIHIHGTSFTMHTPCGKINISLPFLGYQNISNALAASAFSFALKIPLKKIKIGLLDTPIVSKRLESIILEPNKILIDDTYNSNVSSMISAIKVLERMPGYKILVTGDMAELGENSMMYHQMIGNTANSSAINKIFSIGDMSSEITKIFNNGKHFLNKKKLSEYLKNVFLKKKKITILVKGSRSTKMEKVVEDLIKESKKKC.

107 to 113 (GSCGKTS) serves as a coordination point for ATP.

It belongs to the MurCDEF family. MurF subfamily.

It localises to the cytoplasm. The enzyme catalyses D-alanyl-D-alanine + UDP-N-acetyl-alpha-D-muramoyl-L-alanyl-gamma-D-glutamyl-meso-2,6-diaminopimelate + ATP = UDP-N-acetyl-alpha-D-muramoyl-L-alanyl-gamma-D-glutamyl-meso-2,6-diaminopimeloyl-D-alanyl-D-alanine + ADP + phosphate + H(+). Its pathway is cell wall biogenesis; peptidoglycan biosynthesis. Involved in cell wall formation. Catalyzes the final step in the synthesis of UDP-N-acetylmuramoyl-pentapeptide, the precursor of murein. This chain is UDP-N-acetylmuramoyl-tripeptide--D-alanyl-D-alanine ligase, found in Buchnera aphidicola subsp. Acyrthosiphon pisum (strain APS) (Acyrthosiphon pisum symbiotic bacterium).